Here is a 431-residue protein sequence, read N- to C-terminus: 2-oxoisovalerate dehydrogenase subunit alpha, mitochondrial (431 aa).

Residue Q140–R142 coordinates thiamine diphosphate. The K(+) site is built by S189, T194, and Q195.

This sequence belongs to the BCKDHA family. Thiamine diphosphate is required as a cofactor.

Its subcellular location is the mitochondrion matrix. It carries out the reaction N(6)-[(R)-lipoyl]-L-lysyl-[protein] + 3-methyl-2-oxobutanoate + H(+) = N(6)-[(R)-S(8)-2-methylpropanoyldihydrolipoyl]-L-lysyl-[protein] + CO2. It participates in lipid metabolism; fatty acid biosynthesis. The branched-chain alpha-keto dehydrogenase complex catalyzes the overall conversion of alpha-keto acids to acyl-CoA and CO(2). It contains multiple copies of three enzymatic components: branched-chain alpha-keto acid decarboxylase (E1), lipoamide acyltransferase (E2) and lipoamide dehydrogenase (E3). Required for the production of the monomethyl branched-chain fatty acids (mmBCFAs) isopentadecanoate (C15iso) and isoheptadecanoate (C17iso). The sequence is that of 2-oxoisovalerate dehydrogenase subunit alpha, mitochondrial from Caenorhabditis elegans.